The sequence spans 348 residues: MSKQTIVLLYGGRSAEREVSVLSAESVMRAINYDKFHVKTYFISQAGDFYKTQEFTVQPSESEKLMTNASLDASLKIKASDIYEDKAVVFPLLHGPMGEDGSIQGFLEILKMPYVGTNILSSSVAMDKITTKRVLESAGIPQVNYTVYIEGNDLEDCITETLETLSFPIFVKPANMGSSVGISKAESIEGLREAIALALKYDSRILIEQGVVAREIEVGLLGNTKVASTLPGEVIKDVAFYDYQAKYIDNKISMAIPATIDEGITSQMRYFAEQAFKAIGACGLSRCDFFLAEDGNLYLNELNTMPGFTQWSMYPLLWDNMGLSYSDLIEELVSLAEEMFQKRESHLI.

In terms of domain architecture, ATP-grasp spans 132–334; it reads KRVLESAGIP…YSDLIEELVS (203 aa). 162-217 is an ATP binding site; it reads LETLSFPIFVKPANMGSSVGISKAESIEGLREAIALALKYDSRILIEQGVVAREIE. Residues D288, E301, and N303 each coordinate Mg(2+).

The protein belongs to the D-alanine--D-alanine ligase family. The cofactor is Mg(2+). Mn(2+) serves as cofactor.

Its subcellular location is the cytoplasm. It catalyses the reaction 2 D-alanine + ATP = D-alanyl-D-alanine + ADP + phosphate + H(+). The protein operates within cell wall biogenesis; peptidoglycan biosynthesis. Its function is as follows. Cell wall formation. The polypeptide is D-alanine--D-alanine ligase (Streptococcus uberis (strain ATCC BAA-854 / 0140J)).